Here is a 150-residue protein sequence, read N- to C-terminus: Deoxyuridine 5'-triphosphate nucleotidohydrolase (150 aa).

Residues 69–71 (RSG), N82, 86–88 (LID), and K96 each bind substrate.

This sequence belongs to the dUTPase family. Mg(2+) is required as a cofactor.

It catalyses the reaction dUTP + H2O = dUMP + diphosphate + H(+). It functions in the pathway pyrimidine metabolism; dUMP biosynthesis; dUMP from dCTP (dUTP route): step 2/2. This enzyme is involved in nucleotide metabolism: it produces dUMP, the immediate precursor of thymidine nucleotides and it decreases the intracellular concentration of dUTP so that uracil cannot be incorporated into DNA. In Neisseria meningitidis serogroup A / serotype 4A (strain DSM 15465 / Z2491), this protein is Deoxyuridine 5'-triphosphate nucleotidohydrolase.